The primary structure comprises 102 residues: Large ribosomal subunit protein bL21 (102 aa).

The protein belongs to the bacterial ribosomal protein bL21 family. In terms of assembly, part of the 50S ribosomal subunit. Contacts protein L20.

Functionally, this protein binds to 23S rRNA in the presence of protein L20. This Bacillus anthracis (strain A0248) protein is Large ribosomal subunit protein bL21.